Reading from the N-terminus, the 1188-residue chain is MARQDETDCKKLDSNSAFLPLCITSYRSKDEAEKLVSCLHHEGSYFLCFSYGLYTGTSNELKAKVEFALDGPFVVNYATVPMFMSASFCHLLMFNDGSIKGFKCENNKFEIIYDSNVAPKLDTISLLTSSWLNASFEGVLYTCNKNISYDSDLHTLCTTIYSFDFREGIVERFYATDGEEIISFDFISREDLLDDATCTGKSHVYFLCLLKSCYSENLFLKEYNLAGKHGSRKFDLNEYRQYNLLPICDNEFCYMKVVCGHTIVVLTTNYTQIINIKASGLTNGAFFNNKGLPNVENYQFLKDSYDVIYERSVILLTISDVYANKYTAKIHTRSLHRDHVLKELQWTKERVFKPPKHDLCDVILQLPREKYIAVTRINGVNFISKDHRGSKLEKVKSGPAYTNKVYLASQVIGNKGTDIDSLLLGGSFNSRRGFLEKKILVYDKTLFKLVTSSKALVENVTDFWVTDLALNGGDEFAYESGGLIYKNGIFLMDEPYDYGLFVSRTGKVLKAGMDGSTGEFRQVDFLQSNHNSSTMFCYPVQNSKLRISILEAKSGFLRKKEEFFIHGLNSKESIVSCFSDGAEKYLFVIYLDGVFSVWNANQKKVATSHPDYSFIAYDQLIKISWLSKKHKHDSIYVIASSYTGCVRVYKSESNFLRVDLEIHSLYDQKLELLDTIPSLPLVFLYNDKEIILLNLQNMSYGCIQLGLVPRRMRIRPGKALFSLCVLDYDSRISIFEFGSTFYREGFTKQMTSLKPQLENHIFYLPSIPVELYTVPNNLNQAVVCLVDSNSRQYKLMLFNYASMKAVSTFSFSDEKYLHAVVKPLWPEQNSIYLSQRPFYGNKFVVCLGVGEKRTKFWLFEIRNNNITQLYANYLEDCIFSVFIYYECNLVLFSGDSGIAAYKINMLKEGAEILEAYSFPALSSINHIGLPAYMSGDYLVQFEILRDFLRTRFPIRTSIVYPSEYPECPYLGFKRLGSITQVATKIIPKKLREPKNDCLASDKNYLLGRLSDLSCATLKYSNRSYVATIGIDNTLTIYEDSKLSVDKGGLAMPYLKIRLPNKIISLAAIPDGFQNLQICPNFNSQRLEGVIPLFLLCGTEGQIYIISEFIGELWMRTLHDYKKIKLECKRAFRRSEKSMRNVTKQYSVSKETGINESGFDELARNSKRRHIDHSPYKTIDFFDPVKLKR.

Helical transmembrane passes span 73 to 93, 878 to 898, and 1089 to 1109; these read FVVN…HLLM, IFSV…DSGI, and VIPL…SEFI.

Its subcellular location is the membrane. This is an uncharacterized protein from Saccharomyces cerevisiae (strain ATCC 204508 / S288c) (Baker's yeast).